The sequence spans 526 residues: MASSCLFNASVSSLNPKQDPIRRHRSTSLLRHRPVVISCTADGNNIKAPIETAVKPPHRTEDNIRDEARRNRSNAVNPFSAKYVPFNAAPGSTESYSLDEIVYRSRSGGLLDVEHDMEALKRFDGAYWRDLFDSRVGKSTWPYGSGVWSKKEWVLPEIDDDDIVSAFEGNSNLFWAERFGKQFLGMNDLWVKHCGISHTGSFKDLGMTVLVSQVNRLRKMKRPVVGVGCASTGDTSAALSAYCASAGIPSIVFLPANKISMAQLVQPIANGAFVLSIDTDFDGCMKLIREITAELPIYLANSLNSLRLEGQKTAAIEILQQFDWQVPDWVIVPGGNLGNIYAFYKGFKMCQELGLVDRIPRMVCAQAANANPLYLHYKSGWKDFKPMTASTTFASAIQIGDPVSIDRAVYALKKCNGIVEEATEEELMDAMAQADSTGMFICPHTGVALTALFKLRNQGVIAPTDRTVVVSTAHGLKFTQSKIDYHSNAIPDMACRFSNPPVDVKADFGAVMDVLKSYLGSNTLTS.

The transit peptide at 1 to 40 directs the protein to the chloroplast; it reads MASSCLFNASVSSLNPKQDPIRRHRSTSLLRHRPVVISCT. S-adenosyl-L-methionine-binding positions include 142-144, 165-167, Asn-172, Leu-173, Lys-181, and Asn-187; these read PYG and SAF. Lys-203 is subject to N6-(pyridoxal phosphate)lysine. Pyridoxal 5'-phosphate is bound by residues 335–339 and Thr-472; that span reads GNLGN.

Belongs to the threonine synthase family. Homodimer. It depends on pyridoxal 5'-phosphate as a cofactor.

Its subcellular location is the plastid. It is found in the chloroplast. The catalysed reaction is O-phospho-L-homoserine + H2O = L-threonine + phosphate. It functions in the pathway amino-acid biosynthesis; L-threonine biosynthesis; L-threonine from L-aspartate: step 5/5. With respect to regulation, allosterically activated by S-adenosyl-L-methionine (SAM). Activated by S-adenosyl-L-ethionine, 5'-amino-5'-deoxyadenosine, sinefungin and 5'-deoxy-5-methylthioadenosine. Inhibited by AMP. In terms of biological role, catalyzes the gamma-elimination of phosphate from L-phosphohomoserine and the beta-addition of water to produce L-threonine. The chain is Threonine synthase 1, chloroplastic (TS1) from Arabidopsis thaliana (Mouse-ear cress).